Reading from the N-terminus, the 450-residue chain is Interferon-induced protein 75 (450 aa).

One can recognise an HSR domain in the interval 1–108; that stretch reads MFTLTKALEK…IFRSFRNVGY (108 aa). Disordered stretches follow at residues 131–156 and 170–225; these read CSLQ…APRV and LDEQ…VKDD. The span at 143 to 154 shows a compositional bias: low complexity; sequence QLSLPSHLSSAP. S175 and S177 each carry phosphoserine. A compositionally biased stretch (basic and acidic residues) spans 197 to 212; it reads SRDHQRKDKEDSREMP. S226 carries the phosphoserine modification. Disordered stretches follow at residues 238–283 and 318–360; these read VLCT…HGVQ and AQTS…KNDA. Basic residues predominate over residues 245 to 267; sequence KKARRKKRLNWSNSKRGRQKKKP. Residues 251-266 carry the Nuclear localization signal motif; the sequence is KRLNWSNSKRGRQKKK. The segment covering 343-353 has biased composition (polar residues); it reads TSTAGKTTQVP. Residues 358–439 enclose the SAND domain; the sequence is NDAVDFLSPT…RQLEQKGLLF (82 aa).

Its subcellular location is the nucleus. The chain is Interferon-induced protein 75 (Ifi75) from Mus caroli (Ryukyu mouse).